A 148-amino-acid polypeptide reads, in one-letter code: Large ribosomal subunit protein bL9 (148 aa).

Belongs to the bacterial ribosomal protein bL9 family.

Binds to the 23S rRNA. The protein is Large ribosomal subunit protein bL9 of Staphylococcus epidermidis (strain ATCC 35984 / DSM 28319 / BCRC 17069 / CCUG 31568 / BM 3577 / RP62A).